The following is a 318-amino-acid chain: Pyrroline-5-carboxylate reductase ucsG (318 aa).

It belongs to the pyrroline-5-carboxylate reductase family.

The protein operates within mycotoxin biosynthesis. Functionally, pyrroline-5-carboxylate reductase; part of the gene cluster that mediates the biosynthesis of UCS1025A, a member of the pyrrolizidinone family that acts as a strong telomerase inhibitor and displays potent antibacterial and antitumor properties. These compounds share a hemiaminal-containing pyrrolizidinone core fused with a gamma-lactone, giving a furopyrrolizidine that is connected to a decalin fragment. The polyketide synthase module (PKS) of the PKS-NRPS ucsA is responsible for the synthesis of the polyketide backbone via the condensation of an acetyl-CoA starter unit with 6 malonyl-CoA units. The downstream nonribosomal peptide synthetase (NRPS) module then amidates the carboxyl end of the polyketide with a 2S,3S-methylproline derived from L-isoleucine by the 2-oxoglutarate-dependent dioxygenase ucsF which converts L-isoleucine to (4S,5S)-4-methylpyrroline-5-carboxylate that is further converted to 2S,3S-methylproline by the pyrroline-5-carboxylate reductase ucsG. Reductive release of the completed aminoacyl polyketide from the assembly line can form the 3-pyrrolin-2-one structure via an intramolecular Knoevenagel reaction. Because ucsA lacks a designated enoylreductase (ER) domain, the required activity is provided the enoyl reductase ucsL. This keto acyclic precursor is the substrate of the Diels-Alderase ucsH, that catalyzes the Diels-Alder cycloaddition. Oxidation of the 3S-methyl group to a carboxylate by the cytochrome P450 monooxygenase ucsK allows an oxa-Michael cyclization that might involve the reductase/dehydrogenase ucsI and which furnishes the furopyrrolizidine. The oxidase ucsJ likely plays a critical role in stereoselective reduction of the C5-C6 double bond to afford the required R-configured carboxylate group. Further enolization and oxidation at C5 by an unidentified enzyme affords the last intermediate that can undergo oxa-Michael cyclization to yield UCS1025A. The sequence is that of Pyrroline-5-carboxylate reductase ucsG from Acremonium sp.